A 117-amino-acid polypeptide reads, in one-letter code: MNNIIKMLNEEQMKQDVPEFGAGDTVVVKVRVVEGGKERLQAFEGVVIAKRNRGVHSAFTVRKISNGEGVERAFQIHSPIISSIEVKRRGRVRRAKLYYLRERSGKSARIREKLATK.

It belongs to the bacterial ribosomal protein bL19 family.

Functionally, this protein is located at the 30S-50S ribosomal subunit interface and may play a role in the structure and function of the aminoacyl-tRNA binding site. The sequence is that of Large ribosomal subunit protein bL19 from Shewanella sediminis (strain HAW-EB3).